The chain runs to 99 residues: Acylphosphatase (99 aa).

One can recognise an Acylphosphatase-like domain in the interval 5–97 (ILQVMIRGRV…RAGEKFSVLP (93 aa)). Active-site residues include Arg-20 and Asn-38.

It belongs to the acylphosphatase family.

The enzyme catalyses an acyl phosphate + H2O = a carboxylate + phosphate + H(+). The sequence is that of Acylphosphatase (acyP) from Bradyrhizobium diazoefficiens (strain JCM 10833 / BCRC 13528 / IAM 13628 / NBRC 14792 / USDA 110).